The sequence spans 393 residues: NAD(P)H-quinone oxidoreductase subunit H, chloroplastic (393 aa).

This sequence belongs to the complex I 49 kDa subunit family. As to quaternary structure, NDH is composed of at least 16 different subunits, 5 of which are encoded in the nucleus.

Its subcellular location is the plastid. The protein resides in the chloroplast thylakoid membrane. It carries out the reaction a plastoquinone + NADH + (n+1) H(+)(in) = a plastoquinol + NAD(+) + n H(+)(out). The enzyme catalyses a plastoquinone + NADPH + (n+1) H(+)(in) = a plastoquinol + NADP(+) + n H(+)(out). In terms of biological role, NDH shuttles electrons from NAD(P)H:plastoquinone, via FMN and iron-sulfur (Fe-S) centers, to quinones in the photosynthetic chain and possibly in a chloroplast respiratory chain. The immediate electron acceptor for the enzyme in this species is believed to be plastoquinone. Couples the redox reaction to proton translocation, and thus conserves the redox energy in a proton gradient. This chain is NAD(P)H-quinone oxidoreductase subunit H, chloroplastic, found in Nasturtium officinale (Watercress).